A 182-amino-acid chain; its full sequence is MEQFHGTTILSVRRGNQVVIGGDGQVTLGNTVMKGNARKVRRLYKDKVIAGFAGGTADAFTLFERFEAKLEMHQGHLIRAAVELAKDWRTDRILRRLEAVLAVADSKASLIITGNGDVIEPEESLIAIGSGGPFAQAAARALMENTQLSAKEIVQKSLTIAGDICIYTNNNLTIEELNDEGK.

Thr7 is a catalytic residue. Na(+) is bound by residues Gly162, Cys165, and Thr168.

Belongs to the peptidase T1B family. HslV subfamily. A double ring-shaped homohexamer of HslV is capped on each side by a ring-shaped HslU homohexamer. The assembly of the HslU/HslV complex is dependent on binding of ATP.

The protein resides in the cytoplasm. The enzyme catalyses ATP-dependent cleavage of peptide bonds with broad specificity.. Its activity is regulated as follows. Allosterically activated by HslU binding. In terms of biological role, protease subunit of a proteasome-like degradation complex believed to be a general protein degrading machinery. This is ATP-dependent protease subunit HslV from Legionella pneumophila (strain Lens).